Here is a 70-residue protein sequence, read N- to C-terminus: ATP synthase subunit c (70 aa).

2 helical membrane-spanning segments follow: residues 4–24 (IAAA…NGLI) and 47–67 (FIGI…SFIV).

It belongs to the ATPase C chain family. As to quaternary structure, F-type ATPases have 2 components, F(1) - the catalytic core - and F(0) - the membrane proton channel. F(1) has five subunits: alpha(3), beta(3), gamma(1), delta(1), epsilon(1). F(0) has three main subunits: a(1), b(2) and c(10-14). The alpha and beta chains form an alternating ring which encloses part of the gamma chain. F(1) is attached to F(0) by a central stalk formed by the gamma and epsilon chains, while a peripheral stalk is formed by the delta and b chains.

Its subcellular location is the cell membrane. Functionally, f(1)F(0) ATP synthase produces ATP from ADP in the presence of a proton or sodium gradient. F-type ATPases consist of two structural domains, F(1) containing the extramembraneous catalytic core and F(0) containing the membrane proton channel, linked together by a central stalk and a peripheral stalk. During catalysis, ATP synthesis in the catalytic domain of F(1) is coupled via a rotary mechanism of the central stalk subunits to proton translocation. Its function is as follows. Key component of the F(0) channel; it plays a direct role in translocation across the membrane. A homomeric c-ring of between 10-14 subunits forms the central stalk rotor element with the F(1) delta and epsilon subunits. The sequence is that of ATP synthase subunit c from Staphylococcus carnosus (strain TM300).